The chain runs to 565 residues: Probable transcription factor lepB (565 aa).

The interval 52-259 (KRYAEDVTYL…PRNLDDRDLD (208 aa)) is fungal specific transcription factor domain.

It localises to the nucleus. Functionally, probable transcription factor; part of the gene cluster 23 that mediates the biosynthesis of a family of 2-pyridones known as leporins. The chain is Probable transcription factor lepB from Aspergillus flavus (strain ATCC 200026 / FGSC A1120 / IAM 13836 / NRRL 3357 / JCM 12722 / SRRC 167).